A 227-amino-acid polypeptide reads, in one-letter code: Cytochrome c oxidase subunit 2 (227 aa).

At 1-14 the chain is on the mitochondrial intermembrane side; it reads MAYPFQLGLQDATS. Residues 15–45 traverse the membrane as a helical segment; it reads PIMEELMNFHDHTLMIVFLISTLVLYIISLM. Residues 46-59 are Mitochondrial matrix-facing; sequence LTTKLTHTSTMDAQ. The chain crosses the membrane as a helical span at residues 60-87; the sequence is EVETVWTILPAVILIMIALPSLRILYMM. The Mitochondrial intermembrane segment spans residues 88-227; the sequence is DEINNPVLTV…HFENWSTSMI (140 aa). Positions 161, 196, 198, 200, 204, and 207 each coordinate Cu cation. E198 is a Mg(2+) binding site.

Belongs to the cytochrome c oxidase subunit 2 family. In terms of assembly, component of the cytochrome c oxidase (complex IV, CIV), a multisubunit enzyme composed of 14 subunits. The complex is composed of a catalytic core of 3 subunits MT-CO1, MT-CO2 and MT-CO3, encoded in the mitochondrial DNA, and 11 supernumerary subunits COX4I, COX5A, COX5B, COX6A, COX6B, COX6C, COX7A, COX7B, COX7C, COX8 and NDUFA4, which are encoded in the nuclear genome. The complex exists as a monomer or a dimer and forms supercomplexes (SCs) in the inner mitochondrial membrane with NADH-ubiquinone oxidoreductase (complex I, CI) and ubiquinol-cytochrome c oxidoreductase (cytochrome b-c1 complex, complex III, CIII), resulting in different assemblies (supercomplex SCI(1)III(2)IV(1) and megacomplex MCI(2)III(2)IV(2)). Found in a complex with TMEM177, COA6, COX18, COX20, SCO1 and SCO2. Interacts with TMEM177 in a COX20-dependent manner. Interacts with COX20. Interacts with COX16. Cu cation serves as cofactor.

The protein localises to the mitochondrion inner membrane. The enzyme catalyses 4 Fe(II)-[cytochrome c] + O2 + 8 H(+)(in) = 4 Fe(III)-[cytochrome c] + 2 H2O + 4 H(+)(out). Its function is as follows. Component of the cytochrome c oxidase, the last enzyme in the mitochondrial electron transport chain which drives oxidative phosphorylation. The respiratory chain contains 3 multisubunit complexes succinate dehydrogenase (complex II, CII), ubiquinol-cytochrome c oxidoreductase (cytochrome b-c1 complex, complex III, CIII) and cytochrome c oxidase (complex IV, CIV), that cooperate to transfer electrons derived from NADH and succinate to molecular oxygen, creating an electrochemical gradient over the inner membrane that drives transmembrane transport and the ATP synthase. Cytochrome c oxidase is the component of the respiratory chain that catalyzes the reduction of oxygen to water. Electrons originating from reduced cytochrome c in the intermembrane space (IMS) are transferred via the dinuclear copper A center (CU(A)) of subunit 2 and heme A of subunit 1 to the active site in subunit 1, a binuclear center (BNC) formed by heme A3 and copper B (CU(B)). The BNC reduces molecular oxygen to 2 water molecules using 4 electrons from cytochrome c in the IMS and 4 protons from the mitochondrial matrix. The chain is Cytochrome c oxidase subunit 2 (MT-CO2) from Apodemus semotus (Taiwan field mouse).